Here is a 416-residue protein sequence, read N- to C-terminus: uncharacterized protein (416 aa).

The next 9 membrane-spanning stretches (helical) occupy residues 5–25 (LFLISLVSFVFFIFGNWILSL), 84–104 (ISGLSAFGTTLLIYFITLKHV), 128–148 (AYVPEFTLVFFSTLGVYLFSI), 160–180 (LAFLTKGPVGVILPIGIYLLW), 192–212 (VLLFILIGFSWYFLMIYKFGF), 237–257 (PIYFYPLVILVSSILFLPVFL), 263–283 (FDKRLLPFAGWFLLVLVFYSL), 288–308 (LHHYILFSYPALSVIIGFYLT), and 312–332 (IKYAYIVGSFLLLILMFGVYI).

Belongs to the glycosyltransferase 83 family.

The protein resides in the cell membrane. This is an uncharacterized protein from Aquifex aeolicus (strain VF5).